Reading from the N-terminus, the 600-residue chain is Zinc finger and BTB domain-containing protein 46 (600 aa).

The region spanning 31–99 (CDACVVVEGK…MYSAHLALTS (69 aa)) is the BTB domain. The disordered stretch occupies residues 173–222 (RRTSPANSSGDSAIASCHEGGSSYGKEDQEPKADGPDDVSSQSLWPGDVG). Basic and acidic residues predominate over residues 197–207 (GKEDQEPKADG). Residue lysine 229 forms a Glycyl lysine isopeptide (Lys-Gly) (interchain with G-Cter in SUMO2) linkage. A Phosphoserine modification is found at serine 234. Residues 235 to 278 (PSHYGGSELPSSKDTAIQNSLSEQGSGDGWQPTGRRKNRKNKET) are disordered. The segment covering 243–259 (LPSSKDTAIQNSLSEQG) has biased composition (polar residues). C2H2-type zinc fingers lie at residues 418–436 (FKCP…LKRH) and 446–468 (YPCE…TLVH). The disordered stretch occupies residues 513 to 600 (LDHGGGGEGS…EPDKDFAWIS (88 aa)). Acidic residues predominate over residues 533 to 555 (YLEDPDDPRGEAEEELVEDEDED). Basic and acidic residues-rich tracts occupy residues 556–574 (VAKW…LLGD) and 591–600 (EPDKDFAWIS).

Post-translationally, sumoylated. Desumoylation by DESI1 reverses transcriptional repression activity.

The protein localises to the nucleus. Its function is as follows. Functions as a transcriptional repressor for PRDM1. In Mus musculus (Mouse), this protein is Zinc finger and BTB domain-containing protein 46 (Zbtb46).